Here is a 323-residue protein sequence, read N- to C-terminus: 1-aminocyclopropane-1-carboxylate oxidase 4 (323 aa).

N-acetylmethionine is present on methionine 1. Positions 153-254 constitute a Fe2OG dioxygenase domain; sequence PTFGTKVSNY…RMSIASFYNP (102 aa). Fe cation is bound by residues histidine 177, aspartate 179, and histidine 234. Residue arginine 245 coordinates 2-oxoglutarate.

It belongs to the iron/ascorbate-dependent oxidoreductase family. The cofactor is Fe cation. Expressed in vegetative tissues. Expressed constitutively at a low level in leaves and blades.

It catalyses the reaction 1-aminocyclopropane-1-carboxylate + L-ascorbate + O2 = ethene + L-dehydroascorbate + hydrogen cyanide + CO2 + 2 H2O. It functions in the pathway alkene biosynthesis; ethylene biosynthesis via S-adenosyl-L-methionine; ethylene from S-adenosyl-L-methionine: step 2/2. In terms of biological role, enzyme involved in the ethylene biosynthesis. May promote stem elongation by maximizing the extensibility cells, possibly by activating ethylene biosynthesis, in response to very-long-chain fatty acids (VLCFAs C20:0 to C30:0). This is 1-aminocyclopropane-1-carboxylate oxidase 4 (ACO4) from Arabidopsis thaliana (Mouse-ear cress).